The chain runs to 92 residues: Protamine-2 (92 aa).

Residues 1-76 (MVRCRVRSPS…RRACRHRRHR (76 aa)) are disordered. Over residues 7-20 (RSPSESPQQGSGQQ) the composition is skewed to low complexity. Phosphoserine occurs at positions 8 and 10. The segment covering 21–36 (RENERQDQDQELRPED) has biased composition (basic and acidic residues). The segment covering 42-76 (RTHRGRYHYRHRSHTRRRRSCRRRRRRACRHRRHR) has biased composition (basic residues).

This sequence belongs to the protamine P2 family. Interacts with TDRP. In terms of processing, proteolytic processing into mature chains is required for histone eviction during spermatogenesis. Transition proteins (TNP1 and TNP2) are required for processing. In terms of tissue distribution, testis.

It is found in the nucleus. It localises to the chromosome. In terms of biological role, protamines substitute for histones in the chromatin of sperm during the haploid phase of spermatogenesis. They compact sperm DNA into a highly condensed, stable and inactive complex. The chain is Protamine-2 (PRM2) from Sus scrofa (Pig).